The primary structure comprises 213 residues: Orotate phosphoribosyltransferase (213 aa).

Residue K26 participates in 5-phospho-alpha-D-ribose 1-diphosphate binding. Position 34-35 (34-35 (FF)) interacts with orotate. Residues 72–73 (YK), R98, K99, K102, H104, and 123–131 (DDVISAGTS) each bind 5-phospho-alpha-D-ribose 1-diphosphate. S127 and R155 together coordinate orotate.

This sequence belongs to the purine/pyrimidine phosphoribosyltransferase family. PyrE subfamily. In terms of assembly, homodimer. Mg(2+) is required as a cofactor.

The enzyme catalyses orotidine 5'-phosphate + diphosphate = orotate + 5-phospho-alpha-D-ribose 1-diphosphate. It participates in pyrimidine metabolism; UMP biosynthesis via de novo pathway; UMP from orotate: step 1/2. Functionally, catalyzes the transfer of a ribosyl phosphate group from 5-phosphoribose 1-diphosphate to orotate, leading to the formation of orotidine monophosphate (OMP). The polypeptide is Orotate phosphoribosyltransferase (Laribacter hongkongensis (strain HLHK9)).